We begin with the raw amino-acid sequence, 230 residues long: Ureidoacrylate amidohydrolase RutB (230 aa).

The Proton acceptor role is filled by aspartate 24. Lysine 133 is a catalytic residue. The active-site Nucleophile is cysteine 166.

This sequence belongs to the isochorismatase family. RutB subfamily.

The enzyme catalyses (Z)-3-ureidoacrylate + H2O + H(+) = (Z)-3-aminoacrylate + NH4(+) + CO2. It catalyses the reaction (Z)-3-ureidoacrylate + H2O = (Z)-3-aminoacrylate + carbamate + H(+). The catalysed reaction is (Z)-2-methylureidoacrylate + H2O + H(+) = (Z)-2-methylaminoacrylate + NH4(+) + CO2. Hydrolyzes ureidoacrylate to form aminoacrylate and carbamate. The carbamate hydrolyzes spontaneously, thereby releasing one of the nitrogen atoms of the pyrimidine ring as ammonia and one of its carbon atoms as CO2. This Escherichia coli O44:H18 (strain 042 / EAEC) protein is Ureidoacrylate amidohydrolase RutB.